The sequence spans 206 residues: Large ribosomal subunit protein uL4 (206 aa).

Residues glutamine 45–glycine 85 form a disordered region. Basic residues predominate over residues histidine 58 to glycine 70.

It belongs to the universal ribosomal protein uL4 family. In terms of assembly, part of the 50S ribosomal subunit.

Its function is as follows. One of the primary rRNA binding proteins, this protein initially binds near the 5'-end of the 23S rRNA. It is important during the early stages of 50S assembly. It makes multiple contacts with different domains of the 23S rRNA in the assembled 50S subunit and ribosome. Forms part of the polypeptide exit tunnel. This is Large ribosomal subunit protein uL4 from Burkholderia mallei (strain NCTC 10247).